Reading from the N-terminus, the 725-residue chain is Mitochondrial 15S rRNA processing factor CCM1 (725 aa).

A mitochondrion-targeting transit peptide spans 1-21 (MRLSRIGTPKVSVTRVIPVRN). 7 PPR repeats span residues 189–223 (SAVD…GISP), 224–259 (DRYL…GWAP), 260–290 (TDYT…MKLK), 296–330 (NKKI…SVAT), 333–363 (DTTA…LETE), 401–435 (NEKL…RFKM), and 601–635 (NHDI…RKTP).

The protein belongs to the CCM1 family. Binds to mitochondrial small subunit 15S rRNA.

Its subcellular location is the mitochondrion. Its function is as follows. Regulates mitochondrial small subunit maturation by controlling 15S rRNA 5'-end processing. Localizes to the 5' precursor of the 15S rRNA in a position that is subsequently occupied by mS47 in the mature yeast mtSSU. Uses structure and sequence-specific RNA recognition, binding to a single-stranded region of the precursor and specifically recognizing bases -6 to -1. The exchange of Ccm1 for mS47 is coupled to the irreversible removal of precursor rRNA that is accompanied by conformational changes of the mitoribosomal proteins uS5m and mS26. These conformational changes signal completion of 5'-end rRNA processing through protection of the mature 5'-end of the 15S rRNA and stabilization of mS47. The removal of the 5' precursor together with the dissociation of Ccm1 may be catalyzed by the 5'-3' exoribonuclease Pet127. Involved in the specific removal of group I introns in mitochondrial encoded transcripts. The polypeptide is Mitochondrial 15S rRNA processing factor CCM1 (CCM1) (Komagataella phaffii (strain GS115 / ATCC 20864) (Yeast)).